The chain runs to 197 residues: 7-methyl-GTP pyrophosphatase (197 aa).

Aspartate 74 (proton acceptor) is an active-site residue.

This sequence belongs to the Maf family. YceF subfamily. A divalent metal cation is required as a cofactor.

The protein resides in the cytoplasm. It carries out the reaction N(7)-methyl-GTP + H2O = N(7)-methyl-GMP + diphosphate + H(+). In terms of biological role, nucleoside triphosphate pyrophosphatase that hydrolyzes 7-methyl-GTP (m(7)GTP). May have a dual role in cell division arrest and in preventing the incorporation of modified nucleotides into cellular nucleic acids. This chain is 7-methyl-GTP pyrophosphatase, found in Saccharophagus degradans (strain 2-40 / ATCC 43961 / DSM 17024).